We begin with the raw amino-acid sequence, 242 residues long: ATP-dependent dethiobiotin synthetase BioD (242 aa).

An ATP-binding site is contributed by 12-17 (EVGKTV). Residue Thr-16 coordinates Mg(2+). Residue Lys-37 is part of the active site. Ser-41 is a binding site for substrate. ATP-binding positions include Asp-51 and 112 to 115 (EGAG). Mg(2+)-binding residues include Asp-51 and Glu-112.

It belongs to the dethiobiotin synthetase family. Homodimer. It depends on Mg(2+) as a cofactor.

The protein resides in the cytoplasm. It carries out the reaction (7R,8S)-7,8-diammoniononanoate + CO2 + ATP = (4R,5S)-dethiobiotin + ADP + phosphate + 3 H(+). The protein operates within cofactor biosynthesis; biotin biosynthesis; biotin from 7,8-diaminononanoate: step 1/2. Its function is as follows. Catalyzes a mechanistically unusual reaction, the ATP-dependent insertion of CO2 between the N7 and N8 nitrogen atoms of 7,8-diaminopelargonic acid (DAPA, also called 7,8-diammoniononanoate) to form a ureido ring. This is ATP-dependent dethiobiotin synthetase BioD from Bacillus cereus (strain ATCC 14579 / DSM 31 / CCUG 7414 / JCM 2152 / NBRC 15305 / NCIMB 9373 / NCTC 2599 / NRRL B-3711).